Consider the following 242-residue polypeptide: Triosephosphate isomerase (242 aa).

8–10 serves as a coordination point for substrate; the sequence is NWK. H98 serves as the catalytic Electrophile. Catalysis depends on E167, which acts as the Proton acceptor. Substrate-binding positions include G173, S205, and 226–227; that span reads GG.

Belongs to the triosephosphate isomerase family. In terms of assembly, homodimer.

The protein localises to the cytoplasm. It catalyses the reaction D-glyceraldehyde 3-phosphate = dihydroxyacetone phosphate. It participates in carbohydrate biosynthesis; gluconeogenesis. Its pathway is carbohydrate degradation; glycolysis; D-glyceraldehyde 3-phosphate from glycerone phosphate: step 1/1. In terms of biological role, involved in the gluconeogenesis. Catalyzes stereospecifically the conversion of dihydroxyacetone phosphate (DHAP) to D-glyceraldehyde-3-phosphate (G3P). This Mesomycoplasma hyopneumoniae (strain 232) (Mycoplasma hyopneumoniae) protein is Triosephosphate isomerase.